The following is a 504-amino-acid chain: Arabinose import ATP-binding protein AraG (504 aa).

2 consecutive ABC transporter domains span residues 8–243 (LSFR…MVGR) and 256–499 (YGEE…MPKV). 40–47 (GENGAGKS) contacts ATP.

It belongs to the ABC transporter superfamily. Arabinose importer (TC 3.A.1.2.2) family. As to quaternary structure, the complex is composed of two ATP-binding proteins (AraG), two transmembrane proteins (AraH) and a solute-binding protein (AraF).

Its subcellular location is the cell inner membrane. It carries out the reaction L-arabinose(out) + ATP + H2O = L-arabinose(in) + ADP + phosphate + H(+). In terms of biological role, part of the ABC transporter complex AraFGH involved in arabinose import. Responsible for energy coupling to the transport system. This is Arabinose import ATP-binding protein AraG from Escherichia coli (strain UTI89 / UPEC).